Here is a 342-residue protein sequence, read N- to C-terminus: DNA primase small subunit PriS (342 aa).

Active-site residues include aspartate 97, aspartate 99, and aspartate 236.

The protein belongs to the eukaryotic-type primase small subunit family. As to quaternary structure, heterodimer of a small subunit (PriS) and a large subunit (PriL). Mg(2+) is required as a cofactor. It depends on Mn(2+) as a cofactor.

Functionally, catalytic subunit of DNA primase, an RNA polymerase that catalyzes the synthesis of short RNA molecules used as primers for DNA polymerase during DNA replication. The small subunit contains the primase catalytic core and has DNA synthesis activity on its own. Binding to the large subunit stabilizes and modulates the activity, increasing the rate of DNA synthesis while decreasing the length of the DNA fragments, and conferring RNA synthesis capability. The DNA polymerase activity may enable DNA primase to also catalyze primer extension after primer synthesis. May also play a role in DNA repair. In Aeropyrum pernix (strain ATCC 700893 / DSM 11879 / JCM 9820 / NBRC 100138 / K1), this protein is DNA primase small subunit PriS.